Consider the following 140-residue polypeptide: uncharacterized protein (140 aa).

This is an uncharacterized protein from Mycoplasma genitalium (strain ATCC 33530 / DSM 19775 / NCTC 10195 / G37) (Mycoplasmoides genitalium).